A 177-amino-acid polypeptide reads, in one-letter code: Adenine phosphoribosyltransferase (177 aa).

The protein belongs to the purine/pyrimidine phosphoribosyltransferase family. In terms of assembly, homodimer.

It is found in the cytoplasm. It catalyses the reaction AMP + diphosphate = 5-phospho-alpha-D-ribose 1-diphosphate + adenine. The protein operates within purine metabolism; AMP biosynthesis via salvage pathway; AMP from adenine: step 1/1. Catalyzes a salvage reaction resulting in the formation of AMP, that is energically less costly than de novo synthesis. The chain is Adenine phosphoribosyltransferase from Pelodictyon phaeoclathratiforme (strain DSM 5477 / BU-1).